Consider the following 98-residue polypeptide: Guanine nucleotide-binding protein subunit gamma 1 (98 aa).

Residues 19–98 enclose the G protein gamma domain; sequence GKHRILAELA…GGEGCRCLIL (80 aa). The stretch at 20-50 forms a coiled coil; sequence KHRILAELARVEQEVAFLEKELKEVENTDIV. The segment at 88–94 is regulates lipidation and cell membrane subcellular localization; it reads NGGEGCR. Cys93 is lipidated: S-palmitoyl cysteine. Cys95 is subject to Cysteine methyl ester. The S-farnesyl cysteine moiety is linked to residue Cys95. A propeptide spans 96 to 98 (removed in mature form); the sequence is LIL.

As to quaternary structure, g proteins are composed of 3 units, alpha, beta and gamma. Interacts with the beta subunit GB1. The dimer GB1-GG1 interacts with NDL1, NDL2 and NDL3. Binds to NUDT7. In terms of tissue distribution, mostly expressed in seedlings (especially at the hypocotyl/root junction), young cauline leaves, open flowers, and floral stems, and, to a lower extent, in roots (restricted to the stele), rosette leaves (restricted to veins), siliques, and unopened floral buds. Also present in hydathods.

The protein localises to the cell membrane. Its subcellular location is the golgi apparatus membrane. It localises to the golgi apparatus. The protein resides in the trans-Golgi network membrane. It is found in the cytoplasm. Its function is as follows. Guanine nucleotide-binding proteins (G proteins) are involved as a modulator or transducer in various transmembrane signaling systems. The beta and gamma chains are required for the GTPase activity, for replacement of GDP by GTP, and for G protein-effector interaction. Involved in the abscisic acid (ABA) and ethylene signaling pathways. Regulates acropetal transport of auxin (IAA) in roots and hypocotyls, and thus modulates root architecture (e.g. lateral root formation). The heterotrimeric G-protein controls defense responses to necrotrophic and vascular fungi probably by modulating cell wall-related genes expression; involved in resistance to fungal pathogens such as Alternaria brassicicola, Plectosphaerella cucumerina and Fusarium oxysporum. The chain is Guanine nucleotide-binding protein subunit gamma 1 (GG1) from Arabidopsis thaliana (Mouse-ear cress).